We begin with the raw amino-acid sequence, 160 residues long: Probable NADH dehydrogenase [ubiquinone] 1 beta subcomplex subunit 2, mitochondrial (160 aa).

The protein belongs to the complex I NDUFB2 subunit family. In terms of assembly, complex I is composed of 45 different subunits.

It is found in the mitochondrion inner membrane. Its function is as follows. Accessory subunit of the mitochondrial membrane respiratory chain NADH dehydrogenase (Complex I), that is believed not to be involved in catalysis. Complex I functions in the transfer of electrons from NADH to the respiratory chain. The immediate electron acceptor for the enzyme is believed to be ubiquinone. The sequence is that of Probable NADH dehydrogenase [ubiquinone] 1 beta subcomplex subunit 2, mitochondrial from Caenorhabditis elegans.